Here is a 371-residue protein sequence, read N- to C-terminus: Mannonate dehydratase (371 aa).

It belongs to the mannonate dehydratase family. It depends on Fe(2+) as a cofactor. Mn(2+) serves as cofactor.

It catalyses the reaction D-mannonate = 2-dehydro-3-deoxy-D-gluconate + H2O. The protein operates within carbohydrate metabolism; pentose and glucuronate interconversion. Its function is as follows. Catalyzes the dehydration of D-mannonate. This is Mannonate dehydratase from Geobacillus thermodenitrificans (strain NG80-2).